The sequence spans 349 residues: Protein RecA (349 aa).

71 to 75 (SSGKT) is a binding site for phosphate. ATP contacts are provided by residues 71–76 (SSGKTT) and 102–105 (DPEY). Gln196 serves as a coordination point for phosphate.

The protein belongs to the RecA family. As to quaternary structure, polymerizes non-specifically on ssDNA to form filaments. Interacts with and activates LexA leading to autocatalytic cleavage of LexA, which derepresses the SOS regulon and activates DNA repair.

The protein resides in the cytoplasm. Its function is as follows. Required for homologous recombination (HR) and the bypass of mutagenic DNA lesions (double strand breaks, DSB) by the SOS response. Can catalyze the hydrolysis of ATP in the presence of single-stranded DNA, the ATP-dependent uptake of single-stranded DNA by duplex DNA, and the ATP-dependent hybridization of homologous single-stranded DNAs. Numerous X-ray crystals have been resolved under different conditions which indicate the flexibility of the protein, essential to its function. Gln-196 contributes to this plasticity by acting as a switch residue, which transmits the effect of nucleotide binding to the DNA-binding region. The chain is Protein RecA from Mycolicibacterium smegmatis (strain ATCC 700084 / mc(2)155) (Mycobacterium smegmatis).